Here is a 675-residue protein sequence, read N- to C-terminus: MVAPAPAKERIQALKELINNYDYAYYVVNNPLVPDSEYDRLIRELQALEENYPELITLDSPTQRVGAKPVKSLGEIKHEIPMLSLNNAFHEGELADFHRRVKTRLGIERVDYAAEPKLDGLAVSLLYQDGVLVQGATRGDGITGEDITHNIRTIPTVSLRLRGEKIPSLLEVRGEVYMPRQGFEQFNREQIAKGEKPFVNPRNAAAGSLRQLDPRITANRPLALFCYGVGQVEGGILPDRHSEILFQLKQWGLRILPYSEVVEELAGCEKYYQHLLDLRDKLPYEIDGVVFKVDYLDQQQILGSLARAPRWALAYKFPAQEELTQILDIEVQVGRTGALTPVARLQPVFVGGVTVSKATLHNEGEIQRKDIRIGDTVYVRRAGDVIPEIVKVIMERRLPDSRPFQMPRQCPVCGSEIVKEEGGAVARCSGGLYCPAQRKEAIKHFAGRRAMDINGLGDKLVEQLTKQGLLKDVADLYGLTKEQLAGLERMGQKSATNLINAIQQSKHTTLPRFLYALGIREVGEATAQVLAKEFGSLEALASVSEERLQQVTDIGPIVAAHIAAFFRQPHNRQIIQGLQKAGVCWPEVEDKVQIVQPLLGRTFVLTGTLESMTREQAKERLQALGGKVNGSVSPHTDYLIIGANPGSKLVKARNLGITILDETYFRNFLDDTSFP.

NAD(+) contacts are provided by residues D35–D39, S84–L85, and E115. The N6-AMP-lysine intermediate role is filled by K117. R138, E175, K292, and K316 together coordinate NAD(+). Positions 410, 413, 428, and 434 each coordinate Zn(2+). One can recognise a BRCT domain in the interval Q593–P675.

This sequence belongs to the NAD-dependent DNA ligase family. LigA subfamily. Mg(2+) is required as a cofactor. Requires Mn(2+) as cofactor.

It carries out the reaction NAD(+) + (deoxyribonucleotide)n-3'-hydroxyl + 5'-phospho-(deoxyribonucleotide)m = (deoxyribonucleotide)n+m + AMP + beta-nicotinamide D-nucleotide.. DNA ligase that catalyzes the formation of phosphodiester linkages between 5'-phosphoryl and 3'-hydroxyl groups in double-stranded DNA using NAD as a coenzyme and as the energy source for the reaction. It is essential for DNA replication and repair of damaged DNA. This is DNA ligase from Nitrosococcus oceani (strain ATCC 19707 / BCRC 17464 / JCM 30415 / NCIMB 11848 / C-107).